A 393-amino-acid chain; its full sequence is PGA synthase CapB (393 aa).

Requires Mn(2+) as cofactor.

In terms of biological role, catalyzes the biosynthesis of PGA (gamma-polyglutamic acid) from L-glutamate. Both the 44-kDa and the 33-kDa forms are required for PGA synthesis. The chain is PGA synthase CapB (capB) from Bacillus subtilis (strain 168).